The primary structure comprises 323 residues: Beta-ketoacyl-[acyl-carrier-protein] synthase III (323 aa).

Residues Cys-114 and His-250 contribute to the active site. Positions 251-255 (QANIR) are ACP-binding. Asn-280 is a catalytic residue.

The protein belongs to the thiolase-like superfamily. FabH family. Homodimer.

Its subcellular location is the cytoplasm. It catalyses the reaction malonyl-[ACP] + acetyl-CoA + H(+) = 3-oxobutanoyl-[ACP] + CO2 + CoA. Its pathway is lipid metabolism; fatty acid biosynthesis. Its function is as follows. Catalyzes the condensation reaction of fatty acid synthesis by the addition to an acyl acceptor of two carbons from malonyl-ACP. Catalyzes the first condensation reaction which initiates fatty acid synthesis and may therefore play a role in governing the total rate of fatty acid production. Possesses both acetoacetyl-ACP synthase and acetyl transacylase activities. Its substrate specificity determines the biosynthesis of branched-chain and/or straight-chain of fatty acids. The chain is Beta-ketoacyl-[acyl-carrier-protein] synthase III from Roseobacter denitrificans (strain ATCC 33942 / OCh 114) (Erythrobacter sp. (strain OCh 114)).